Reading from the N-terminus, the 431-residue chain is Glutamate-1-semialdehyde 2,1-aminomutase (431 aa).

An N6-(pyridoxal phosphate)lysine modification is found at K269.

The protein belongs to the class-III pyridoxal-phosphate-dependent aminotransferase family. HemL subfamily. In terms of assembly, homodimer. Pyridoxal 5'-phosphate is required as a cofactor.

The protein localises to the cytoplasm. It catalyses the reaction (S)-4-amino-5-oxopentanoate = 5-aminolevulinate. The protein operates within porphyrin-containing compound metabolism; protoporphyrin-IX biosynthesis; 5-aminolevulinate from L-glutamyl-tRNA(Glu): step 2/2. In Francisella tularensis subsp. tularensis (strain SCHU S4 / Schu 4), this protein is Glutamate-1-semialdehyde 2,1-aminomutase.